The chain runs to 312 residues: Ribonuclease HIII (312 aa).

An RNase H type-2 domain is found at 95 to 311 (FNCIGSDEAG…REKAQKILKP (217 aa)). A divalent metal cation contacts are provided by aspartate 101, glutamate 102, and aspartate 206.

It belongs to the RNase HII family. RnhC subfamily. The cofactor is Mn(2+). It depends on Mg(2+) as a cofactor.

The protein resides in the cytoplasm. It carries out the reaction Endonucleolytic cleavage to 5'-phosphomonoester.. Functionally, endonuclease that specifically degrades the RNA of RNA-DNA hybrids. The sequence is that of Ribonuclease HIII from Staphylococcus aureus (strain MW2).